A 545-amino-acid chain; its full sequence is Heparanase (545 aa).

An N-terminal signal peptide occupies residues 1–37 (MLACRKPGLRPPLLLLLPLLGPLGPCSPGTPAAAAPA). Residue 64–66 (DAN) coordinates heparan sulfate group. The propeptide at 112 to 159 (PAFEERSYWLSQSNQDICKSGSIPSDVEEKLRLEWPFQEQVLLREQYQ) is linker peptide. A disulfide bridge links cysteine 129 with cysteine 181. A heparan sulfate group-binding site is contributed by 160 to 164 (KKFTN). N-linked (GlcNAc...) asparagine glycosylation is found at asparagine 164 and asparagine 219. Glutamate 227 acts as the Proton donor in catalysis. Residues 272–282 (QPRRNTVKMLK), histidine 298, and arginine 305 each bind heparan sulfate group. The tract at residues 290-419 (EVIDSVTWHH…LLFKKLVGNK (130 aa)) is required for heterodimerization with the heparanase 8 kDa subunit. Residue glutamate 345 is the Nucleophile of the active site. Residues 350-352 (FGG) and 391-393 (GNY) each bind heparan sulfate group. Cysteine 439 and cysteine 544 are oxidised to a cystine. Residue asparagine 461 is glycosylated (N-linked (GlcNAc...) asparagine). The segment at 529-545 (FSYGFFVIRNAKVAACI) is required for transferring proheparanase to the Golgi apparatus, secretion and subsequent enzyme activity and for enhancement of PKB/AKT1 phosphorylation.

The protein belongs to the glycosyl hydrolase 79 family. In terms of assembly, heterodimer; heterodimer formation between the 8 kDa and the 50 kDa subunits is required for enzyme activity. Interacts with TF; the interaction, inhibited by heparin, enhances the generation of activated factor X and activates coagulation. Interacts with HRG; the interaction is enhanced at acidic pH, partially inhibits binding of HPSE to cell surface receptors and modulates its enzymatic activity. Interacts with SDC1; the interaction enhances the shedding of SDC1. Interacts with HPSE2. In terms of processing, proteolytically processed. The cleavage of the 65 kDa form leads to the generation of a linker peptide, and the 8 kDa and the 50 kDa products. The active form, the 8/50 kDa heterodimer, is resistant to degradation. Complete removal of the linker peptide appears to be a prerequisite to the complete activation of the enzyme. Post-translationally, N-glycosylated. Glycosylation of the 50 kDa subunit appears to be essential for its solubility. Highly expressed in placenta and weakly in the kidney, lung, spleen and uterus.

It localises to the lysosome membrane. It is found in the secreted. The protein resides in the nucleus. The enzyme catalyses endohydrolysis of (1-&gt;4)-beta-D-glycosidic bonds of heparan sulfate chains in heparan sulfate proteoglycan.. Inhibited by laminarin sulfate and, to a lower extent, by heparin, sulfamin and EDTA. Activated by calcium and magnesium. In terms of biological role, endoglycosidase that cleaves heparan sulfate proteoglycans (HSPGs) into heparan sulfate side chains and core proteoglycans. Participates in extracellular matrix (ECM) degradation and remodeling. Selectively cleaves the linkage between a glucuronic acid unit and an N-sulfo glucosamine unit carrying either a 3-O-sulfo or a 6-O-sulfo group. Can also cleave the linkage between a glucuronic acid unit and an N-sulfo glucosamine unit carrying a 2-O-sulfo group, but not linkages between a glucuronic acid unit and a 2-O-sulfated iduronic acid moiety. Essentially inactive at neutral pH but becomes active under acidic conditions such as during tumor invasion and in inflammatory processes. Facilitates cell migration associated with metastasis, wound healing and inflammation. Enhances shedding of syndecans. Acts as a procoagulant by enhancing the generation of activated factor X/F10 in the presence of tissue factor/TF and activated factor VII/F7. Independent of its enzymatic activity, increases cell adhesion to the extracellular matrix (ECM). Enhances AKT1/PKB phosphorylation, possibly via interaction with a lipid raft-resident receptor. Plays a role in the regulation of osteogenesis. Enhances angiogenesis through up-regulation of SRC-mediated activation of VEGF. Implicated in hair follicle inner root sheath differentiation and hair homeostasis. The chain is Heparanase (HPSE) from Bos taurus (Bovine).